The primary structure comprises 1449 residues: DNA polymerase III PolC-type (1449 aa).

The segment at 194-231 (AQEKPVKKESSDNKHKSNGGNKGGYEKKSYKDEPKNEN) is disordered. Composition is skewed to basic and acidic residues over residues 197–208 (KPVKKESSDNKH) and 217–229 (GYEK…EPKN). In terms of domain architecture, Exonuclease spans 435-590 (YVVFDIETTG…DDAKATAEIL (156 aa)).

It belongs to the DNA polymerase type-C family. PolC subfamily.

It localises to the cytoplasm. The catalysed reaction is DNA(n) + a 2'-deoxyribonucleoside 5'-triphosphate = DNA(n+1) + diphosphate. In terms of biological role, required for replicative DNA synthesis. This DNA polymerase also exhibits 3' to 5' exonuclease activity. The sequence is that of DNA polymerase III PolC-type from Clostridium perfringens (strain 13 / Type A).